Reading from the N-terminus, the 248-residue chain is Ribonuclease PH (248 aa).

Residues arginine 86 and 124-126 contribute to the phosphate site; that span reads GTR.

This sequence belongs to the RNase PH family. In terms of assembly, homohexameric ring arranged as a trimer of dimers.

It catalyses the reaction tRNA(n+1) + phosphate = tRNA(n) + a ribonucleoside 5'-diphosphate. Functionally, phosphorolytic 3'-5' exoribonuclease that plays an important role in tRNA 3'-end maturation. Removes nucleotide residues following the 3'-CCA terminus of tRNAs; can also add nucleotides to the ends of RNA molecules by using nucleoside diphosphates as substrates, but this may not be physiologically important. Probably plays a role in initiation of 16S rRNA degradation (leading to ribosome degradation) during starvation. The sequence is that of Ribonuclease PH from Clostridium perfringens (strain ATCC 13124 / DSM 756 / JCM 1290 / NCIMB 6125 / NCTC 8237 / Type A).